The sequence spans 416 residues: Type II methyltransferase M.PspPI (416 aa).

Positions 77 to 410 (YSLVELFAGA…KAIIRMLNAA (334 aa)) constitute an SAM-dependent MTase C5-type domain. The active site involves C149.

It belongs to the class I-like SAM-binding methyltransferase superfamily. C5-methyltransferase family.

The catalysed reaction is a 2'-deoxycytidine in DNA + S-adenosyl-L-methionine = a 5-methyl-2'-deoxycytidine in DNA + S-adenosyl-L-homocysteine + H(+). Functionally, a methylase, recognizes the double-stranded sequence 5'-GGNCC-3', methylates C-4 on both strands, and protects the DNA from cleavage by the PspPI endonuclease. The chain is Type II methyltransferase M.PspPI from Psychrobacter sp. (strain TA137).